A 459-amino-acid chain; its full sequence is Argininosuccinate lyase (459 aa).

It belongs to the lyase 1 family. Argininosuccinate lyase subfamily.

It is found in the cytoplasm. The catalysed reaction is 2-(N(omega)-L-arginino)succinate = fumarate + L-arginine. It participates in amino-acid biosynthesis; L-arginine biosynthesis; L-arginine from L-ornithine and carbamoyl phosphate: step 3/3. In Staphylococcus aureus (strain Mu3 / ATCC 700698), this protein is Argininosuccinate lyase.